The chain runs to 193 residues: Regulator of free ubiquitin chains 1 (193 aa).

This sequence belongs to the RFU1 family.

It is found in the endosome. Functionally, inhibitor of the DOA4 deubiquitinase involved in the regulation of protein degradation by the proteasome and maintenance of a normal level of free ubiquitin. The chain is Regulator of free ubiquitin chains 1 (RFU1) from Eremothecium gossypii (strain ATCC 10895 / CBS 109.51 / FGSC 9923 / NRRL Y-1056) (Yeast).